The primary structure comprises 1074 residues: Phospholipase D1 (1074 aa).

The region spanning 81–212 (IKAQVLEVER…TEFLDISQLS (132 aa)) is the PX domain. Residues 219–328 (PKGIEGMIMK…WGGAIEEFIQ (110 aa)) enclose the PH domain. S-palmitoyl cysteine attachment occurs at residues Cys240 and Cys241. One can recognise a PLD phosphodiesterase 1 domain in the interval 459-486 (YLWAHHEKLVIIDQSVAFVGGIDLAYGR). A catalytic region spans residues 463-928 (HHEKLVIIDQ…MLGKRDSEMA (466 aa)). 3 positions are modified to phosphoserine: Ser499, Ser561, and Ser629. The PLD phosphodiesterase 2 domain occupies 891-918 (ELIYVHSKLLIADDNTVIIGSANINDRS).

Belongs to the phospholipase D family. As to quaternary structure, interacts with PIP5K1B. Expressed abundantly in the pancreas and heart and at high levels in brain, placenta, spleen, uterus and small intestine.

Its subcellular location is the cytoplasm. It is found in the perinuclear region. It localises to the endoplasmic reticulum membrane. The protein localises to the golgi apparatus membrane. The protein resides in the late endosome membrane. It catalyses the reaction a 1,2-diacyl-sn-glycero-3-phosphocholine + H2O = a 1,2-diacyl-sn-glycero-3-phosphate + choline + H(+). The catalysed reaction is ethanol + a 1,2-diacyl-sn-glycero-3-phosphocholine = 1,2-diacyl-sn-glycero-3-phosphoethanol + choline. It carries out the reaction 1,2-dihexadecanoyl-sn-glycero-3-phosphocholine + H2O = 1,2-dihexadecanoyl-sn-glycero-3-phosphate + choline + H(+). With respect to regulation, stimulated by phosphatidylinositol 4,5-bisphosphate and phosphatidylinositol 3,4,5-trisphosphate, activated by the phosphokinase C-alpha, by the ADP-ribosylation factor-1 (ARF-1), and to a lesser extent by GTP-binding proteins: RHO A, RAC-1 and CDC42. Inhibited by oleate. In terms of biological role, function as phospholipase selective for phosphatidylcholine. Implicated as a critical step in numerous cellular pathways, including signal transduction, membrane trafficking, and the regulation of mitosis. May be involved in the regulation of perinuclear intravesicular membrane traffic. The sequence is that of Phospholipase D1 from Homo sapiens (Human).